A 193-amino-acid chain; its full sequence is dITP/XTP pyrophosphatase (193 aa).

Ser-7 to Lys-12 contributes to the substrate binding site. Asp-65 (proton acceptor) is an active-site residue. Asp-65 provides a ligand contact to Mg(2+). Substrate is bound by residues Ser-66, Phe-144 to Asp-147, Lys-167, and His-172 to Arg-173.

This sequence belongs to the HAM1 NTPase family. In terms of assembly, homodimer. It depends on Mg(2+) as a cofactor.

The catalysed reaction is XTP + H2O = XMP + diphosphate + H(+). The enzyme catalyses dITP + H2O = dIMP + diphosphate + H(+). It catalyses the reaction ITP + H2O = IMP + diphosphate + H(+). Pyrophosphatase that catalyzes the hydrolysis of nucleoside triphosphates to their monophosphate derivatives, with a high preference for the non-canonical purine nucleotides XTP (xanthosine triphosphate), dITP (deoxyinosine triphosphate) and ITP. Seems to function as a house-cleaning enzyme that removes non-canonical purine nucleotides from the nucleotide pool, thus preventing their incorporation into DNA/RNA and avoiding chromosomal lesions. The sequence is that of dITP/XTP pyrophosphatase from Tropheryma whipplei (strain Twist) (Whipple's bacillus).